A 109-amino-acid polypeptide reads, in one-letter code: Large ribosomal subunit protein uL18c (109 aa).

It belongs to the universal ribosomal protein uL18 family. Part of the 50S ribosomal subunit; contacts the 5S rRNA.

It is found in the plastid. Its subcellular location is the chloroplast. In terms of biological role, binds 5S rRNA, forms part of the central protuberance of the 50S subunit. This is Large ribosomal subunit protein uL18c (rpl18) from Cyanidioschyzon merolae (strain NIES-3377 / 10D) (Unicellular red alga).